The following is a 368-amino-acid chain: Putative zinc metalloprotease Cj1068 (368 aa).

His-36 serves as a coordination point for Zn(2+). Glu-37 is an active-site residue. His-40 is a Zn(2+) binding site. The next 3 membrane-spanning stretches (helical) occupy residues 112–134, 291–313, and 338–360; these read IYIL…IIIG, FTLL…LLPI, and TFEY…ATYN. The PDZ domain maps to 126–197; that stretch reads AFFLYIIIGN…LKILINREGK (72 aa).

Belongs to the peptidase M50B family. Zn(2+) serves as cofactor.

Its subcellular location is the cell inner membrane. The polypeptide is Putative zinc metalloprotease Cj1068 (Campylobacter jejuni subsp. jejuni serotype O:2 (strain ATCC 700819 / NCTC 11168)).